Here is a 517-residue protein sequence, read N- to C-terminus: U3 small nucleolar RNA-associated protein 15 homolog (517 aa).

WD repeat units lie at residues 36–75 (KEFG…PIRN), 78–117 (RFHD…SLRQ), 120–159 (GHSK…ELSS), 162–202 (EHTD…SVMT), 204–242 (QHGQ…QQLV), 246–285 (NHHK…HNFD), and 287–324 (ASSI…EKEA).

As to quaternary structure, part of the small subunit (SSU) processome, composed of more than 70 proteins and the RNA chaperone small nucleolar RNA (snoRNA) U3. May be a component of the proposed t-UTP subcomplex of the ribosomal small subunit (SSU) processome.

Its subcellular location is the nucleus. The protein resides in the nucleolus. Ribosome biogenesis factor. Involved in nucleolar processing of pre-18S ribosomal RNA. Required for optimal pre-ribosomal RNA transcription by RNA polymerase I. Part of the small subunit (SSU) processome, first precursor of the small eukaryotic ribosomal subunit. During the assembly of the SSU processome in the nucleolus, many ribosome biogenesis factors, an RNA chaperone and ribosomal proteins associate with the nascent pre-rRNA and work in concert to generate RNA folding, modifications, rearrangements and cleavage as well as targeted degradation of pre-ribosomal RNA by the RNA exosome. The protein is U3 small nucleolar RNA-associated protein 15 homolog (utp15) of Danio rerio (Zebrafish).